We begin with the raw amino-acid sequence, 457 residues long: Aromatic amino acid transport protein AroP (457 aa).

Residues 1–18 are Cytoplasmic-facing; sequence MMEGQQHGEQLKRGLKNR. A helical transmembrane segment spans residues 19–39; that stretch reads HIQLIALGGAIGTGLFLGSAS. The Periplasmic segment spans residues 40 to 42; that stretch reads VIQ. A helical membrane pass occupies residues 43–63; it reads SAGPGIILGYAIAGFIAFLIM. At 64 to 98 the chain is on the cytoplasmic side; that stretch reads RQLGEMVVEEPVAGSFSHFAYKYWGSFAGFASGWN. The chain crosses the membrane as a helical span at residues 99-119; it reads YWVLYVLVAMAELTAVGKYIQ. Residues 120-124 are Periplasmic-facing; sequence FWYPE. The helical transmembrane segment at 125–145 threads the bilayer; that stretch reads IPTWVSAAVFFVVINAINLTN. The Cytoplasmic portion of the chain corresponds to 146-147; that stretch reads VK. A helical transmembrane segment spans residues 148-168; sequence VFGEMEFWFAIIKVIAVVAMI. At 169–192 the chain is on the periplasmic side; the sequence is IFGGWLLFSGNGGPQATVSNLWDQ. Residues 193-213 traverse the membrane as a helical segment; the sequence is GGFLPHGFTGLVMMMAIIMFS. The Cytoplasmic segment spans residues 214 to 239; that stretch reads FGGLELVGITAAEADNPEQSIPKATN. Residues 240-260 form a helical membrane-spanning segment; sequence QVIYRILIFYIGSLAVLLSLM. The Periplasmic portion of the chain corresponds to 261 to 279; the sequence is PWTRVTADTSPFVLIFHEL. A helical transmembrane segment spans residues 280 to 300; it reads GDTFVANALNIVVLTAALSVY. At 301–330 the chain is on the cytoplasmic side; it reads NSCVYCNSRMLFGLAQQGNAPKALASVDKR. A helical transmembrane segment spans residues 331-351; sequence GVPVNTILVSALVTALCVLIN. The Periplasmic segment spans residues 352-359; the sequence is YLAPESAF. A helical membrane pass occupies residues 360-380; sequence GLLMALVVSALVINWAMISLA. Over 381–402 the chain is Cytoplasmic; it reads HMKFRRAKQEQGVVTRFPALLY. Residues 403–423 form a helical membrane-spanning segment; that stretch reads PLGNWICLLFMAAVLVIMLMT. Residues 424 to 426 are Periplasmic-facing; that stretch reads PGM. The chain crosses the membrane as a helical span at residues 427-447; sequence AISVYLIPVWLIVLGIGYLFK. The Cytoplasmic portion of the chain corresponds to 448–457; sequence EKTAKAVKAH.

This sequence belongs to the amino acid-polyamine-organocation (APC) superfamily. Amino acid transporter (AAT) (TC 2.A.3.1) family.

Its subcellular location is the cell inner membrane. It carries out the reaction L-phenylalanine(in) + H(+)(in) = L-phenylalanine(out) + H(+)(out). The enzyme catalyses L-tryptophan(in) + H(+)(in) = L-tryptophan(out) + H(+)(out). The catalysed reaction is L-tyrosine(in) + H(+)(in) = L-tyrosine(out) + H(+)(out). With respect to regulation, strong, mutual inhibition of uptake by tyrosine, phenylalanine, and tryptophan. Transport is also inhibited by the aromatic analogs p-fluorophenylalanine, beta-2-thienylalanine and 5-methyltryptophan. In terms of biological role, permease that is involved in the active transport across the cytoplasmic membrane of all three aromatic amino acids, phenylalanine, tyrosine and tryptophan. In Escherichia coli (strain K12), this protein is Aromatic amino acid transport protein AroP.